The chain runs to 130 residues: uncharacterized protein (130 aa).

This is an uncharacterized protein from Escherichia coli (strain K12).